A 479-amino-acid polypeptide reads, in one-letter code: uncharacterized protein (479 aa).

Residues 150 to 158, aspartate 360, arginine 375, and lysine 462 contribute to the ATP site; that span reads TSGSTGKPK.

This sequence belongs to the ATP-dependent AMP-binding enzyme family.

In terms of biological role, may be involved in fatty acid metabolism. This is an uncharacterized protein from Bacillus subtilis (strain 168).